The following is a 310-amino-acid chain: Ribosomal RNA small subunit methyltransferase H (310 aa).

S-adenosyl-L-methionine contacts are provided by residues 32–34 (GGH), aspartate 52, phenylalanine 79, aspartate 100, and glutamine 107.

This sequence belongs to the methyltransferase superfamily. RsmH family.

It is found in the cytoplasm. It carries out the reaction cytidine(1402) in 16S rRNA + S-adenosyl-L-methionine = N(4)-methylcytidine(1402) in 16S rRNA + S-adenosyl-L-homocysteine + H(+). Its function is as follows. Specifically methylates the N4 position of cytidine in position 1402 (C1402) of 16S rRNA. The chain is Ribosomal RNA small subunit methyltransferase H from Bacillus cereus (strain B4264).